Here is a 558-residue protein sequence, read N- to C-terminus: Vanin-like protein 1 (558 aa).

An N-terminal signal peptide occupies residues 1–22 (MSNTWWWLSVVLLILGLMPGMS). The CN hydrolase domain occupies 33-299 (YTAGVVEFKQ…RAIYVAQVPK (267 aa)). An N-linked (GlcNAc...) asparagine glycan is attached at Asn-65. Residue Glu-76 is the Proton acceptor of the active site. Asn-103, Asn-120, and Asn-128 each carry an N-linked (GlcNAc...) asparagine glycan. The Proton donor role is filled by Lys-171. N-linked (GlcNAc...) asparagine glycosylation is present at Asn-180. The active-site Nucleophile is Cys-203. Asn-354 and Asn-379 each carry an N-linked (GlcNAc...) asparagine glycan. Ser-531 carries the GPI-anchor amidated serine lipid modification. Residues 532-558 (GSPGLRILGGWLAMPLIILAIARTMSS) constitute a propeptide, removed in mature form.

The protein belongs to the carbon-nitrogen hydrolase superfamily. BTD/VNN family. As to expression, expressed in larvae and early pupae. Expressed in third instar larvae.

It localises to the cell membrane. This is Vanin-like protein 1 from Drosophila melanogaster (Fruit fly).